The sequence spans 432 residues: Fibrinogen gamma chain (432 aa).

The signal sequence occupies residues 1 to 24; the sequence is MGRIGTPVFLAFLSALTCSLQVHA. A Fibrinogen C-terminal domain is found at 169-412; it reads KISPITGKDC…MTTMKLLPMG (244 aa). A disulfide bridge connects residues cysteine 178 and cysteine 207. Asparagine 227 is a glycosylation site (N-linked (GlcNAc...) asparagine). Residues aspartate 340, aspartate 342, tyrosine 344, and glycine 346 each contribute to the Ca(2+) site. Cysteine 348 and cysteine 361 form a disulfide bridge. The tract at residues 413 to 432 is disordered; sequence RDLSGHGGQQQSKGNSRGDN. A compositionally biased stretch (polar residues) spans 421-432; the sequence is QQQSKGNSRGDN.

As to quaternary structure, heterohexamer; disulfide linked. Contains 2 sets of 3 non-identical chains (alpha, beta and gamma). The 2 heterotrimers are in head to head conformation with the N-termini in a small central domain. Post-translationally, conversion of fibrinogen to fibrin is triggered by thrombin, which cleaves fibrinopeptides A and B from alpha and beta chains, and thus exposes the N-terminal polymerization sites responsible for the formation of the soft clot. The soft clot is converted into the hard clot by factor XIIIA which catalyzes the epsilon-(gamma-glutamyl)lysine cross-linking between gamma chains (stronger) and between alpha chains (weaker) of different monomers.

It localises to the secreted. Together with fibrinogen alpha (FGA) and fibrinogen beta (FGB), polymerizes to form an insoluble fibrin matrix. Has a major function in hemostasis as one of the primary components of blood clots. This chain is Fibrinogen gamma chain (FGG), found in Petromyzon marinus (Sea lamprey).